Consider the following 976-residue polypeptide: 3-O-beta-L-arabinopyranosyl-alpha-L-arabinofuranosidase (976 aa).

Positions 1 to 28 (MSHRNKALVAIVAGTALLISSGAAIGQA) are cleaved as a signal peptide. Glutamate 190 (proton donor) is an active-site residue. Catalysis depends on glutamate 315, which acts as the Nucleophile. In terms of domain architecture, CBM6 spans 519–654 (LLVEEVENTV…DNTLDKFLLY (136 aa)).

Belongs to the glycosyl hydrolase 39 family.

It is found in the secreted. The catalysed reaction is Hydrolysis of beta-L-Arap-(1-&gt;3)-L-Araf disaccharides from non-reducing terminals in branches of type II arabinogalactan attached to proteins.. In terms of biological role, hydrolase involved in the degradation of the gum arabic arabinogalactan protein (AGP) and larch AGP. Catalyzes the release of 3-O-beta-L-arabinopyranosyl-L-arabinose (beta-L-Arap-(1-&gt;3)-L-Ara) from gum arabic AGP and larch AGP. Also cleaves a small amount of beta-L-Arap-(1-&gt;3)-L-Ara from sugar beet arabinan, but wheat AGP cannot be used as a substrate. Can also release 3-O-alpha-D-galactopyranosyl-L-arabinose (alpha-D-Galp-(1-&gt;3)-L-Ara) from gum arabic AGP, with low efficiency. The polypeptide is 3-O-beta-L-arabinopyranosyl-alpha-L-arabinofuranosidase (Bifidobacterium pseudocatenulatum).